Consider the following 280-residue polypeptide: Alpha-methyl-mannoside-specific lectin (280 aa).

Positions 1–26 (MAISKKILPLLSIATIFLLLLNKAHS) are cleaved as a signal peptide. Aspartate 114 and glycine 134 together coordinate a carbohydrate. Mn(2+)-binding residues include glutamate 156 and aspartate 158. The Ca(2+) site is built by aspartate 158 and phenylalanine 160. Residues serine 165 and asparagine 166 each coordinate a carbohydrate. Residues asparagine 166 and aspartate 169 each coordinate Ca(2+). Mn(2+) contacts are provided by aspartate 169 and histidine 174. Positions 248 and 250 each coordinate a carbohydrate.

The protein belongs to the leguminous lectin family. As to quaternary structure, homodimer. Post-translationally, glycosylated.

In terms of biological role, alpha-methyl-D-mannoside-specific lectin. Has hemagglutinating activity towards rabbit erythrocytes. Binds to cytokinins and significantly inhibits physiological effects of cytokinin activity such as cotyledon expansion and delayed leaf senescence. The polypeptide is Alpha-methyl-mannoside-specific lectin (Arachis hypogaea (Peanut)).